Consider the following 388-residue polypeptide: Na(+)/H(+) antiporter NhaA (388 aa).

12 consecutive transmembrane segments (helical) span residues 14–34, 59–79, 95–115, 125–145, 154–174, 177–197, 200–220, 222–242, 257–277, 295–315, 328–348, and 362–382; these read TIGILLIIATLLALFLENSPL, LLLWVNDGLMAVFFFYVGLEI, TFPAIAALGGMVVPALLFASL, GWAIPTATDIAFALGVLSLLG, VFLMTLAIVDDLGAIIVIALF, TKLSLTSLVVASIALTILFIM, MCVISKGAYILVGVALWVSVL, SGVHATLAGVALALLIPYRIN, GLHLWVNFFILPLFAFANAGV, IMLGLFIGKQLGVFGFGYLAV, LIQFYGVAVLAGIGFTMSLFI, and ADKLAVLIGSLLSGIWGYIVL.

It belongs to the NhaA Na(+)/H(+) (TC 2.A.33) antiporter family.

The protein resides in the cell inner membrane. The enzyme catalyses Na(+)(in) + 2 H(+)(out) = Na(+)(out) + 2 H(+)(in). Functionally, na(+)/H(+) antiporter that extrudes sodium in exchange for external protons. This Nitratiruptor sp. (strain SB155-2) protein is Na(+)/H(+) antiporter NhaA.